A 144-amino-acid polypeptide reads, in one-letter code: Large ribosomal subunit protein uL15 (144 aa).

The disordered stretch occupies residues 1–58 (MRLNTLAPAAGSKHAPKRVGRGIGSGLGKTGGRGHKGQKSRSGGKVRPGFEGGQMPLK). The segment covering 21–31 (RGIGSGLGKTG) has biased composition (gly residues). The span at 32 to 44 (GRGHKGQKSRSGG) shows a compositional bias: basic residues.

Belongs to the universal ribosomal protein uL15 family. In terms of assembly, part of the 50S ribosomal subunit.

Binds to the 23S rRNA. The polypeptide is Large ribosomal subunit protein uL15 (Vibrio parahaemolyticus serotype O3:K6 (strain RIMD 2210633)).